A 180-amino-acid chain; its full sequence is Negative modulator of initiation of replication (180 aa).

Residues 87 to 88 (AV) form an interaction with DNA region.

This sequence belongs to the SeqA family. In terms of assembly, homodimer. Polymerizes to form helical filaments.

The protein resides in the cytoplasm. Its function is as follows. Negative regulator of replication initiation, which contributes to regulation of DNA replication and ensures that replication initiation occurs exactly once per chromosome per cell cycle. Binds to pairs of hemimethylated GATC sequences in the oriC region, thus preventing assembly of replication proteins and re-initiation at newly replicated origins. Repression is relieved when the region becomes fully methylated. The chain is Negative modulator of initiation of replication from Ferrimonas balearica (strain DSM 9799 / CCM 4581 / KCTC 23876 / PAT).